A 748-amino-acid polypeptide reads, in one-letter code: Long-chain-alcohol oxidase FAO4B (748 aa).

Residues 1–18 (MEDVRRRNRGHPLLRSKK) are compositionally biased toward basic residues. Residues 1–25 (MEDVRRRNRGHPLLRSKKRGEGYNH) form a disordered region. Transmembrane regions (helical) follow at residues 89–109 (IILMILSFRFGTLLLCGSLCL) and 140–160 (FLLPFRITFFLAKFYTLFYFF). 238–253 (CDAVVVGSGSGGGVAA) lines the FAD pocket. H679 functions as the Proton acceptor in the catalytic mechanism.

This sequence belongs to the GMC oxidoreductase family.

Its subcellular location is the membrane. The catalysed reaction is a long-chain primary fatty alcohol + O2 = a long-chain fatty aldehyde + H2O2. In terms of biological role, long-chain fatty alcohol oxidase involved in the omega-oxidation pathway of lipid degradation. The polypeptide is Long-chain-alcohol oxidase FAO4B (FAO4B) (Arabidopsis thaliana (Mouse-ear cress)).